We begin with the raw amino-acid sequence, 657 residues long: MNAMLNIKEGEFTSTIYTLIHEHKFNDAIRILQYQHERNPKNLAALSLLGYCYYYTQDFQNAADCYSQLSYNYPHHSQYKLYHAQALYHAFKPAEALNVVTTIQDDDLLNESIKLEAAIKYQEDDLVNCRILVDQLPTDDATVLINTACIDYKEGNYSEALQKFNQATEFSGYQSGLAYSIALCYYRRGDYNSSLQLISEIINRGIKDHPEFHIGMVTEGFDVNVVQNSMTLHESALIEAFNLRFAIYYKTKDFKAAKECLTDMPPRHEHDYDPVTLHNLAINTANTDFGDSSAKLQFLLGSNPFPQETFANLLFLYCKNDYFGLAADVLAENPHQSFYCLNEYQFNLLEALIYMPTSPEESLKKLEKLDKECMTRLRKIAVEIQIKKEQKTSDKDDSLEMRNLIESYEDELELYLPVLMTHAKYYWDKRDYLAVEKLFRASNEYCNEHHTWKLNVAHTIFMQEKKYKEAALFYEPIVNRKYDGGILEIPAMVLANLVVCYIMTNQTDEAESILKTVENAEENALMSNPNEKYFHNSIISLVIGSLYCSKGNFEFGMSRVVKALEPPEKKLGVDTWYYAKRCIVAAIEMMAKNILVMRDSVVMEVIQFLSSCEIPGRNIYTVPDDLFEQAAESKVKCNVTYEARMLKAALLTVFHGS.

9 TPR repeats span residues 9 to 42 (EGEF…NPKN), 43 to 76 (LAAL…YPHH), 141 to 174 (ATVL…SGYQ), 175 to 208 (SGLA…GIKD), 238 to 271 (IEAF…HEHD), 384 to 417 (IQIK…LYLP), 418 to 449 (VLMT…CNEH), 451 to 484 (TWKL…KYDG), and 537 to 570 (SIIS…PEKK).

This sequence belongs to the TTC30/dfy-1/fleer family.

The protein localises to the cell projection. Its subcellular location is the cilium. Its function is as follows. Required for polyglutamylation of axonemal tubulin. Plays a role in anterograde intraflagellar transport (IFT), the process by which cilia precursors are transported from the base of the cilium to the site of their incorporation at the tip. This protein is specifically required for the kinesin osm-3 to dock onto and move the IFT particles which contain these precursors. The sequence is that of Tetratricopeptide repeat protein 30 homolog (dyf-1) from Caenorhabditis briggsae.